Reading from the N-terminus, the 146-residue chain is Hemoglobin subunit beta-2 (146 aa).

Residues 2 to 146 (EWTDFERATI…VVSALGRQYH (145 aa)) form the Globin domain. Residues histidine 63 and histidine 92 each coordinate heme b.

Belongs to the globin family. In terms of assembly, hb3 is a heterotetramer of two alpha-2 chains and two beta-2 chains. Red blood cells.

Functionally, involved in oxygen transport from gills to the various peripheral tissues. The protein is Hemoglobin subunit beta-2 (hbb2) of Anarhichas minor (Arctic spotted wolffish).